A 660-amino-acid chain; its full sequence is FAST kinase domain-containing protein 3, mitochondrial (660 aa).

The transit peptide at 1-57 (MALVTLRRNLYHLSDFRIHGALAALKTQQVNHVHKTVKEHLCPWFWSQHPGPIRVRF) directs the protein to the mitochondrion. The 59-residue stretch at 591-649 (VALCIDGPKRFCLNSKHLLGKEATKQRHLRLLGYQVVQIPYYEIEMLKSRLELVDYLQG) folds into the RAP domain.

Belongs to the FAST kinase family.

The protein resides in the mitochondrion. Required for normal mitochondrial respiration. Increases steady-state levels and half-lives of a subset of mature mitochondrial mRNAs MT-ND2, MT-ND3, MT-CYTB, MT-CO2, and MT-ATP8/6. Promotes MT-CO1 mRNA translation and increases mitochondrial complex IV assembly and activity. The polypeptide is FAST kinase domain-containing protein 3, mitochondrial (FASTKD3) (Bos taurus (Bovine)).